The primary structure comprises 108 residues: DNA-binding protein HBbu (108 aa).

This sequence belongs to the bacterial histone-like protein family.

In terms of biological role, histone-like DNA-binding protein which is capable of wrapping DNA to stabilize it, and thus to prevent its denaturation under extreme environmental conditions. This Borrelia andersonii (Borreliella andersonii) protein is DNA-binding protein HBbu (hbb).